Consider the following 639-residue polypeptide: Putative oxidoreductase UacF (639 aa).

4Fe-4S ferredoxin-type domains are found at residues 3 to 32 (KFIA…ENWP), 47 to 77 (KGQA…TFQS), 78 to 107 (DSVQ…MVDT), 110 to 139 (QKCD…LMDD), and 201 to 235 (QQAT…YIRL). Residues cysteine 12, cysteine 15, cysteine 18, cysteine 22, cysteine 56, cysteine 59, cysteine 64, cysteine 68, cysteine 87, cysteine 90, cysteine 93, cysteine 97, cysteine 112, cysteine 115, cysteine 125, cysteine 129, cysteine 210, cysteine 213, cysteine 219, and cysteine 223 each coordinate [4Fe-4S] cluster.

[4Fe-4S] cluster is required as a cofactor.

Involved in formate-dependent uric acid degradation under microaerobic and anaerobic conditions. May reduce the enzymes necessary for uric acid degradation. The protein is Putative oxidoreductase UacF of Escherichia coli (strain K12).